We begin with the raw amino-acid sequence, 105 residues long: Nucleoid-associated protein EAT1b_1710 (105 aa).

The segment covering Met-1–Lys-16 has biased composition (low complexity). Positions Met-1–Glu-26 are disordered. The segment covering Met-17 to Glu-26 has biased composition (basic and acidic residues).

This sequence belongs to the YbaB/EbfC family. In terms of assembly, homodimer.

Its subcellular location is the cytoplasm. The protein localises to the nucleoid. Functionally, binds to DNA and alters its conformation. May be involved in regulation of gene expression, nucleoid organization and DNA protection. The chain is Nucleoid-associated protein EAT1b_1710 from Exiguobacterium sp. (strain ATCC BAA-1283 / AT1b).